Here is a 147-residue protein sequence, read N- to C-terminus: Transcriptional regulator MraZ (147 aa).

SpoVT-AbrB domains lie at 5 to 47 (QQLR…SEKE) and 76 to 123 (TFEI…SKSK).

The protein belongs to the MraZ family. Forms oligomers.

The protein resides in the cytoplasm. It is found in the nucleoid. This chain is Transcriptional regulator MraZ, found in Mycoplasmopsis synoviae (strain 53) (Mycoplasma synoviae).